A 379-amino-acid chain; its full sequence is DNA-directed RNA polymerase subunit Rpo1C (379 aa).

It belongs to the RNA polymerase beta' chain family. In terms of assembly, part of the RNA polymerase complex.

It localises to the cytoplasm. It carries out the reaction RNA(n) + a ribonucleoside 5'-triphosphate = RNA(n+1) + diphosphate. Functionally, DNA-dependent RNA polymerase (RNAP) catalyzes the transcription of DNA into RNA using the four ribonucleoside triphosphates as substrates. Forms part of the jaw domain. This is DNA-directed RNA polymerase subunit Rpo1C from Pyrobaculum aerophilum (strain ATCC 51768 / DSM 7523 / JCM 9630 / CIP 104966 / NBRC 100827 / IM2).